The sequence spans 243 residues: Pyridoxine 5'-phosphate synthase (243 aa).

3-amino-2-oxopropyl phosphate is bound at residue asparagine 9. 11–12 (DH) serves as a coordination point for 1-deoxy-D-xylulose 5-phosphate. Residue arginine 20 participates in 3-amino-2-oxopropyl phosphate binding. Histidine 45 (proton acceptor) is an active-site residue. 2 residues coordinate 1-deoxy-D-xylulose 5-phosphate: arginine 47 and histidine 52. The active-site Proton acceptor is the glutamate 72. Threonine 102 serves as a coordination point for 1-deoxy-D-xylulose 5-phosphate. Histidine 193 acts as the Proton donor in catalysis. 3-amino-2-oxopropyl phosphate-binding positions include glycine 194 and 215-216 (GH).

It belongs to the PNP synthase family. As to quaternary structure, homooctamer; tetramer of dimers.

The protein localises to the cytoplasm. It carries out the reaction 3-amino-2-oxopropyl phosphate + 1-deoxy-D-xylulose 5-phosphate = pyridoxine 5'-phosphate + phosphate + 2 H2O + H(+). Its pathway is cofactor biosynthesis; pyridoxine 5'-phosphate biosynthesis; pyridoxine 5'-phosphate from D-erythrose 4-phosphate: step 5/5. Functionally, catalyzes the complicated ring closure reaction between the two acyclic compounds 1-deoxy-D-xylulose-5-phosphate (DXP) and 3-amino-2-oxopropyl phosphate (1-amino-acetone-3-phosphate or AAP) to form pyridoxine 5'-phosphate (PNP) and inorganic phosphate. The protein is Pyridoxine 5'-phosphate synthase of Vibrio vulnificus (strain CMCP6).